A 336-amino-acid chain; its full sequence is Eukaryotic translation initiation factor 3 subunit I (336 aa).

WD repeat units follow at residues 8-47, 50-91, 146-185, 190-229, and 287-326; these read GHER…RLGT, GHLG…KVWE, CTES…QLEN, EFDH…ILKT, and GHFG…FDFM.

The protein belongs to the eIF-3 subunit I family. As to quaternary structure, component of the eukaryotic translation initiation factor 3 (eIF-3) complex.

The protein localises to the cytoplasm. Component of the eukaryotic translation initiation factor 3 (eIF-3) complex, which is involved in protein synthesis of a specialized repertoire of mRNAs and, together with other initiation factors, stimulates binding of mRNA and methionyl-tRNAi to the 40S ribosome. The eIF-3 complex specifically targets and initiates translation of a subset of mRNAs involved in cell proliferation. This is Eukaryotic translation initiation factor 3 subunit I (tif34) from Emericella nidulans (strain FGSC A4 / ATCC 38163 / CBS 112.46 / NRRL 194 / M139) (Aspergillus nidulans).